The chain runs to 250 residues: Cobalt transport protein CbiM (250 aa).

Positions 1–24 (MKYWGTALLGAFCVFFFTPNTAYA) are cleaved as a signal peptide. Transmembrane regions (helical) follow at residues 32-52 (LPAG…FWGI), 67-87 (MLLG…IPSV), 99-119 (LGAI…VLLF), 122-142 (LLLA…MGVM), 161-181 (VAVF…TSLQ), and 203-223 (IFAI…VFVF).

This sequence belongs to the CbiM family. Forms an energy-coupling factor (ECF) transporter complex composed of an ATP-binding protein (A component, CbiO), a transmembrane protein (T component, CbiQ) and 2 possible substrate-capture proteins (S components, CbiM and CbiN) of unknown stoichimetry.

Its subcellular location is the cell membrane. It participates in cofactor biosynthesis; adenosylcobalamin biosynthesis. In terms of biological role, part of the energy-coupling factor (ECF) transporter complex CbiMNOQ involved in cobalt import. This chain is Cobalt transport protein CbiM, found in Desulforamulus reducens (strain ATCC BAA-1160 / DSM 100696 / MI-1) (Desulfotomaculum reducens).